The primary structure comprises 582 residues: Semenogelin-2 (582 aa).

A signal peptide spans 1–23 (MKSIILFVLSLLLILEKQAAVMG). Disordered regions lie at residues 25–62 (KGGSKGQLSSGSSRFPHRHRSQHYSGQKDKQHTESKGS), 91–190 (HKTT…QGGS), and 272–553 (NLNQ…FSGA). Basic and acidic residues predominate over residues 50–59 (GQKDKQHTES). Basic residues predominate over residues 92-134 (KTTKSKQHLRRHQRLLNYKQKGRGRVKPKRHFHLIVIHRKGGQ). 2 stretches are compositionally biased toward polar residues: residues 137 to 161 (HGTQNPSQDQGNSPSGKGISSQYSN) and 174 to 190 (EQASASGAQKGRTQGGS). A compositionally biased stretch (basic and acidic residues) spans 293-305 (TEERQPNHEEKSV). The span at 325–335 (KSQNQVTIPSQ) shows a compositional bias: polar residues. Basic and acidic residues predominate over residues 336–345 (DQEHGHKENK). The segment covering 385 to 395 (KSQNQVAIPSQ) has biased composition (polar residues). Residues 396-405 (DQEHGHKENK) show a composition bias toward basic and acidic residues. The segment covering 445-455 (KSQNQVTIPSQ) has biased composition (polar residues). Over residues 456–465 (DQEHGHKENK) the composition is skewed to basic and acidic residues. 2 stretches are compositionally biased toward polar residues: residues 487–498 (KDVSQSSLSFQT) and 506–529 (SQIQTPNPNQGQWSGQNAKGNSGK). Over residues 530 to 546 (SADRKQDLLSHEQEGRY) the composition is skewed to basic and acidic residues.

The protein belongs to the semenogelin family. Interacts with SERPINA5.

It localises to the secreted. Its function is as follows. Participates in the formation of a gel matrix (sperm coagulum) entrapping the accessory gland secretions and ejaculated spermatozoa. In Macaca fascicularis (Crab-eating macaque), this protein is Semenogelin-2 (SEMG2).